A 342-amino-acid polypeptide reads, in one-letter code: Heparan sulfate glucosamine 3-O-sulfotransferase 6 (342 aa).

At 1–31 (MAGSGGLGGGAGDLQGAGTGQGTALRALRAP) the chain is on the cytoplasmic side. Residues 32-49 (LALVVLLLSAYCLFALPG) traverse the membrane as a helical; Signal-anchor for type II membrane protein segment. At 50–342 (RCPPAARAPA…QMTGQDFGWD (293 aa)) the chain is on the lumenal side. The segment at 56–75 (RAPAPVPAPAEPPHTSLRLR) is disordered. 100 to 104 (KGGTR) contributes to the 3'-phosphoadenylyl sulfate binding site. Substrate is bound by residues 122-128 (EPHFFDR) and 153-156 (KTPS). 2 residues coordinate 3'-phosphoadenylyl sulfate: arginine 181 and serine 189. 220–221 (WS) serves as a coordination point for substrate. N-linked (GlcNAc...) asparagine glycosylation occurs at asparagine 281. Cysteines 288 and 300 form a disulfide. 305 to 309 (KGRPH) is a binding site for 3'-phosphoadenylyl sulfate.

It belongs to the sulfotransferase 1 family. Expressed in liver and kidney, followed by heart, brain, lung and testis.

The protein resides in the golgi apparatus membrane. The enzyme catalyses alpha-D-glucosaminyl-[heparan sulfate](n) + 3'-phosphoadenylyl sulfate = 3-sulfo-alpha-D-glucosaminyl-[heparan sulfate](n) + adenosine 3',5'-bisphosphate + H(+). Functionally, sulfotransferase that utilizes 3'-phospho-5'-adenylyl sulfate (PAPS) to catalyze the transfer of a sulfo group to heparan sulfate. Unlike 3-OST-1, does not convert non-anticoagulant heparan sulfate to anticoagulant heparan sulfate. The polypeptide is Heparan sulfate glucosamine 3-O-sulfotransferase 6 (Hs3st6) (Mus musculus (Mouse)).